Reading from the N-terminus, the 385-residue chain is WD repeat-containing protein RUP1 (385 aa).

WD repeat units lie at residues 69–108, 119–160, 163–205, 210–250, 254–292, 298–337, and 348–385; these read TGSD…ESRD, CTPA…PVSE, EHGG…TLEE, GGGA…DPLI, GHTK…RVVR, VNSR…PVWV, and SDRR…GKQS.

In terms of assembly, interacts with UVR8. Interacts directly with DHU1.

The protein localises to the nucleus. It localises to the cytoplasm. It is found in the cytosol. Functions in association with RUP2 as repressor of UV-B-induced photomorphogenesis mediated by UVR8 and HY5, likely in coordination with DHU1. Plays a crucial negative feedback regulatory role downstream of UVR8-COP1 to inhibit UVR8 function, balance UV-B-specific responses and ensure normal plant growth. Is involved in the regulation of photoperiodic flowering and vegetative development. In Arabidopsis thaliana (Mouse-ear cress), this protein is WD repeat-containing protein RUP1.